The chain runs to 270 residues: uncharacterized protein (270 aa).

Possibly involved in pGI2 replication mechanism. This is an uncharacterized protein from Bacillus thuringiensis.